A 218-amino-acid polypeptide reads, in one-letter code: CTP-dependent diacylglycerol kinase 1 (218 aa).

At 1 to 19 (MSTKLTWSQWSKKHEIPRK) the chain is on the lumenal side. Residues 20–37 (ALHTSIGFFALLLQGCGY) form a helical membrane-spanning segment. Position 38 (histidine 38) is a topological domain, cytoplasmic. Residues 39–59 (AAQIIPVIEIGFIPAFTGDVI) form a helical membrane-spanning segment. The Lumenal portion of the chain corresponds to 60–88 (RFNWPAFSRLYNRVIGPLMRESEKNAWNG). The helical transmembrane segment at 89–109 (VIFYMIGVWIVLKVFPEEIAV) threads the bilayer. The Cytoplasmic portion of the chain corresponds to 110–142 (MSVLLLSWCDTTASTVGRKWGKYTPKIAKNKSL). A helical membrane pass occupies residues 143-163 (AGSLGAFVCGVFCCYVYWGLF). The Lumenal segment spans residues 164–179 (RTGPDSLAAQSRIPFP). The next 2 membrane-spanning stretches (helical) occupy residues 180-200 (WLCLINGFIGAFAEAMDVWGL) and 201-217 (DDNLVIPVVSACLLYLI). Residue methionine 218 is a topological domain, lumenal.

This sequence belongs to the DGK1 family. Ca(2+) serves as cofactor. It depends on Mg(2+) as a cofactor.

The protein resides in the endoplasmic reticulum membrane. It localises to the nucleus membrane. The enzyme catalyses a 1,2-diacyl-sn-glycerol + CTP = a 1,2-diacyl-sn-glycero-3-phosphate + CDP + H(+). CTP-dependent diacylglycerol kinase that catalyzes the phosphorylation of diacylglycerol (DAG) to phosphatidate (PA). Controls phosphatidate levels at the nuclear envelope. Counteracts the activity of PA phosphatase ned1. May be involved in vesicle trafficking between the endoplasmic reticulum and the Golgi apparatus. Involved in pre-tRNA splicing. This chain is CTP-dependent diacylglycerol kinase 1 (ptp4), found in Schizosaccharomyces pombe (strain 972 / ATCC 24843) (Fission yeast).